A 219-amino-acid chain; its full sequence is N-(5'-phosphoribosyl)anthranilate isomerase (219 aa).

Belongs to the TrpF family.

It catalyses the reaction N-(5-phospho-beta-D-ribosyl)anthranilate = 1-(2-carboxyphenylamino)-1-deoxy-D-ribulose 5-phosphate. It functions in the pathway amino-acid biosynthesis; L-tryptophan biosynthesis; L-tryptophan from chorismate: step 3/5. The protein is N-(5'-phosphoribosyl)anthranilate isomerase of Mesorhizobium japonicum (strain LMG 29417 / CECT 9101 / MAFF 303099) (Mesorhizobium loti (strain MAFF 303099)).